A 676-amino-acid chain; its full sequence is DNA ligase (676 aa).

Residues 34-38 (DQEFD), 83-84 (SL), and glutamate 117 each bind NAD(+). Lysine 119 serves as the catalytic N6-AMP-lysine intermediate. NAD(+) contacts are provided by arginine 140, glutamate 177, lysine 285, and lysine 309. 4 residues coordinate Zn(2+): cysteine 403, cysteine 406, cysteine 427, and cysteine 434. Residues 595-676 (NNNGLLKNKT…EWLKMLNKSG (82 aa)) enclose the BRCT domain.

Belongs to the NAD-dependent DNA ligase family. LigA subfamily. Mg(2+) serves as cofactor. Requires Mn(2+) as cofactor.

The catalysed reaction is NAD(+) + (deoxyribonucleotide)n-3'-hydroxyl + 5'-phospho-(deoxyribonucleotide)m = (deoxyribonucleotide)n+m + AMP + beta-nicotinamide D-nucleotide.. Functionally, DNA ligase that catalyzes the formation of phosphodiester linkages between 5'-phosphoryl and 3'-hydroxyl groups in double-stranded DNA using NAD as a coenzyme and as the energy source for the reaction. It is essential for DNA replication and repair of damaged DNA. This chain is DNA ligase, found in Pelagibacter ubique (strain HTCC1062).